A 31-amino-acid polypeptide reads, in one-letter code: Cytochrome b6-f complex subunit 6 (31 aa).

A helical transmembrane segment spans residues 3 to 23; sequence LFIGYIIFLVAFFGLATGLFL.

This sequence belongs to the PetL family. The 4 large subunits of the cytochrome b6-f complex are cytochrome b6, subunit IV (17 kDa polypeptide, PetD), cytochrome f and the Rieske protein, while the 4 small subunits are PetG, PetL, PetM and PetN. The complex functions as a dimer.

The protein localises to the plastid. It localises to the chloroplast thylakoid membrane. Its function is as follows. Component of the cytochrome b6-f complex, which mediates electron transfer between photosystem II (PSII) and photosystem I (PSI), cyclic electron flow around PSI, and state transitions. PetL is important for photoautotrophic growth as well as for electron transfer efficiency and stability of the cytochrome b6-f complex. The sequence is that of Cytochrome b6-f complex subunit 6 from Porphyra purpurea (Red seaweed).